The following is a 174-amino-acid chain: Glutamyl-tRNA(Gln) amidotransferase subunit F, mitochondrial (174 aa).

It belongs to the GatF family. In terms of assembly, subunit of the heterotrimeric GatFAB amidotransferase (AdT) complex, composed of A, B and F subunits.

Its subcellular location is the mitochondrion inner membrane. The enzyme catalyses L-glutamyl-tRNA(Gln) + L-glutamine + ATP + H2O = L-glutaminyl-tRNA(Gln) + L-glutamate + ADP + phosphate + H(+). In terms of biological role, allows the formation of correctly charged Gln-tRNA(Gln) through the transamidation of misacylated Glu-tRNA(Gln) in the mitochondria. The reaction takes place in the presence of glutamine and ATP through an activated gamma-phospho-Glu-tRNA(Gln). Required for proper protein synthesis within the mitochondrion. This is Glutamyl-tRNA(Gln) amidotransferase subunit F, mitochondrial from Kluyveromyces lactis (strain ATCC 8585 / CBS 2359 / DSM 70799 / NBRC 1267 / NRRL Y-1140 / WM37) (Yeast).